Consider the following 109-residue polypeptide: MQQFLHSMKHYAIFFAVIAALTYVLTLVLGADKVDLDKYSTVTITKGDTLWELSNKYHNHHHLTTNEFVKWVEDVNDLNSDTAQSLSPGDKLYIPVLKKELHNQVAIEQ.

Positions 40–94 (STVTITKGDTLWELSNKYHNHHHLTTNEFVKWVEDVNDLNSDTAQSLSPGDKLYI) constitute a LysM domain.

The protein belongs to the YneA family.

It localises to the cytoplasm. Functionally, inhibits cell division during the SOS response. Affects a later stage of the cell division protein assembly, after the assembly of the Z ring, by probably suppressing recruitment of FtsL and/or DivIC to the division machinery. The protein is Cell division suppressor protein YneA of Priestia megaterium (strain DSM 319 / IMG 1521) (Bacillus megaterium).